The primary structure comprises 259 residues: Phosphoadenosine 5'-phosphosulfate reductase (259 aa).

The active-site Nucleophile; cysteine thiosulfonate intermediate is cysteine 244.

The protein belongs to the PAPS reductase family. CysH subfamily.

It localises to the cytoplasm. The enzyme catalyses [thioredoxin]-disulfide + sulfite + adenosine 3',5'-bisphosphate + 2 H(+) = [thioredoxin]-dithiol + 3'-phosphoadenylyl sulfate. It functions in the pathway sulfur metabolism; hydrogen sulfide biosynthesis; sulfite from sulfate: step 3/3. In terms of biological role, catalyzes the formation of sulfite from phosphoadenosine 5'-phosphosulfate (PAPS) using thioredoxin as an electron donor. The protein is Phosphoadenosine 5'-phosphosulfate reductase of Vibrio campbellii (strain ATCC BAA-1116).